Consider the following 116-residue polypeptide: Cation channel sperm-associated auxiliary subunit TMEM262 (116 aa).

At 1 to 16 the chain is on the cytoplasmic side; it reads MWLQDRIATFFFPKGM. A helical membrane pass occupies residues 17 to 38; sequence MLTTAALMLFFLHLGIFIRDVH. Topologically, residues 39–51 are extracellular; it reads NFCITYHYDHMSF. The helical transmembrane segment at 52 to 72 threads the bilayer; that stretch reads HYTVVLMFSQVISICWAAMGS. The Cytoplasmic portion of the chain corresponds to 73-84; that stretch reads LYAEMTENKYVC. The chain crosses the membrane as a helical span at residues 85–107; that stretch reads FSALTILMLNGAMFFNRLSLEFL. Residues 108 to 116 are Extracellular-facing; that stretch reads AIEYREEHH.

As to quaternary structure, component of the CatSper complex or CatSpermasome composed of the core pore-forming members CATSPER1, CATSPER2, CATSPER3 and CATSPER4 as well as auxiliary members CATSPERB, CATSPERG, CATSPERD, CATSPERE, CATSPERZ, C2CD6/CATSPERT, TMEM249, TMEM262 and EFCAB9. HSPA1 may be an additional auxiliary complex member. The core complex members CATSPER1, CATSPER2, CATSPER3 and CATSPER4 form a heterotetrameric channel. The auxiliary CATSPERB, CATSPERG, CATSPERD and CATSPERE subunits form a pavilion-like structure over the pore which stabilizes the complex through interactions with CATSPER4, CATSPER3, CATSPER1 and CATSPER2 respectively. TMEM262/CATSPERH interacts with CATSPERB, further stabilizing the complex. C2CD6/CATSPERT interacts at least with CATSPERD and is required for targeting the CatSper complex in the flagellar membrane.

The protein localises to the cell projection. The protein resides in the cilium. Its subcellular location is the flagellum membrane. Functionally, auxiliary component of the CatSper complex, a complex involved in sperm cell hyperactivation. This chain is Cation channel sperm-associated auxiliary subunit TMEM262, found in Homo sapiens (Human).